The following is a 162-amino-acid chain: CASP-like protein 1C1 (162 aa).

The Cytoplasmic segment spans residues 1–7 (MAKLHRL). The chain crosses the membrane as a helical span at residues 8 to 28 (ISAVLRLAAAGAAAAAAIIMV). At 29 to 50 (TSHETTSFFGIEMEAKYSYTPS) the chain is on the extracellular side. Residues 51 to 71 (FVFFVVAFAVAFAYSLLALLA) form a helical membrane-spanning segment. Topologically, residues 72 to 79 (RPGSTASR) are cytoplasmic. Residues 80–100 (LLLLSDVMVGMLLTGAVAATG) form a helical membrane-spanning segment. The Extracellular portion of the chain corresponds to 101 to 128 (AISQVGKSGNEHAGWLPICAQVQAYCSH). The helical transmembrane segment at 129–149 (VMGALIAGFVSLLLYFLIIMY) threads the bilayer. At 150–162 (SLHAVAEPLCSCH) the chain is on the cytoplasmic side.

Belongs to the Casparian strip membrane proteins (CASP) family. Homodimer and heterodimers.

Its subcellular location is the cell membrane. The chain is CASP-like protein 1C1 from Sorghum bicolor (Sorghum).